Consider the following 358-residue polypeptide: Prostaglandin E2 receptor EP2 subtype (358 aa).

The Extracellular portion of the chain corresponds to 1 to 23; it reads MGNASNDSQSEDCETRQWLPPGE. N-linked (GlcNAc...) asparagine glycans are attached at residues asparagine 3 and asparagine 6. The chain crosses the membrane as a helical span at residues 24–47; sequence SPAISSVMFSAGVLGNLIALALLA. Over 48–65 the chain is Cytoplasmic; that stretch reads RRWRGDVGCSAGRRSSLS. Residues 66 to 91 form a helical membrane-spanning segment; it reads LFHVLVTELVFTDLLGTCLISPVVLA. Residues 92-111 are Extracellular-facing; that stretch reads SYARNQTLVALAPESRACTY. Asparagine 96 is a glycosylation site (N-linked (GlcNAc...) asparagine). A disulfide bridge links cysteine 109 with cysteine 187. A helical membrane pass occupies residues 112–132; the sequence is FAFAMTFFSLATMLMLFAMAL. Residues 133–151 are Cytoplasmic-facing; the sequence is ERYLSIGHPYFYQRRVSRS. Residues 152–176 form a helical membrane-spanning segment; that stretch reads GGLAVLPVIYAVSLLFCSLPLLDYG. Residues 177–198 are Extracellular-facing; sequence QYVQYCPGTWCFIRHGRTAYLQ. A helical membrane pass occupies residues 199-223; it reads LYATLLLLLIVSVLACNFSVILNLI. Topologically, residues 224–262 are cytoplasmic; sequence RMHRRSRRSRCGPSLGSGRGGPGARRRGERVSMAEETDH. Positions 231–253 are disordered; the sequence is RSRCGPSLGSGRGGPGARRRGER. Residues 263–286 traverse the membrane as a helical segment; sequence LILLAIMTITFAVCSLPFTIFAYM. The N-linked (GlcNAc...) asparagine glycan is linked to asparagine 287. Residues 287 to 299 lie on the Extracellular side of the membrane; it reads NETSSRKEKWDLQ. A helical membrane pass occupies residues 300-323; it reads ALRFLSINSIIDPWVFAILRPPVL. Residues 324–358 are Cytoplasmic-facing; the sequence is RLMRSVLCCRISLRTQDATQTSCSTQSDASKQADL.

This sequence belongs to the G-protein coupled receptor 1 family. Placenta and lung.

The protein resides in the cell membrane. Functionally, receptor for prostaglandin E2 (PGE2). The activity of this receptor is mediated by G(s) proteins that stimulate adenylate cyclase. The subsequent raise in intracellular cAMP is responsible for the relaxing effect of this receptor on smooth muscle. This is Prostaglandin E2 receptor EP2 subtype (PTGER2) from Homo sapiens (Human).